The primary structure comprises 505 residues: Katanin p60 ATPase-containing subunit A-like 2 (505 aa).

The 33-residue stretch at 25–57 (RRKNLLILIMHYLLQEGYVDSANSLEQETKISS) folds into the LisH domain. 2 disordered regions span residues 94–127 (LDHD…IGQQ) and 140–167 (RTNG…EASE). Polar residues-rich tracts occupy residues 114-127 (GSNS…IGQQ) and 155-164 (QESGGNSPQE). 298–305 (GPPGTGKT) serves as a coordination point for ATP.

It belongs to the AAA ATPase family. Katanin p60 subunit A1 subfamily. A-like 2 sub-subfamily.

It is found in the cytoplasm. The protein resides in the cytoskeleton. Its subcellular location is the spindle. It localises to the spindle pole. The catalysed reaction is n ATP + n H2O + a microtubule = n ADP + n phosphate + (n+1) alpha/beta tubulin heterodimers.. Functionally, severs microtubules in vitro in an ATP-dependent manner. This activity may promote rapid reorganization of cellular microtubule arrays. The polypeptide is Katanin p60 ATPase-containing subunit A-like 2 (katnal2) (Xenopus laevis (African clawed frog)).